We begin with the raw amino-acid sequence, 170 residues long: Lipoprotein signal peptidase (170 aa).

The next 3 membrane-spanning stretches (helical) occupy residues 12–32 (WYWV…WVLS), 67–87 (WQRW…SVWL), and 94–116 (MWRL…IDRL). Catalysis depends on residues Asp-123 and Asp-141. The helical transmembrane segment at 133 to 153 (HFPAFNIADSAICVGAALIIL) threads the bilayer.

It belongs to the peptidase A8 family.

The protein resides in the cell inner membrane. It carries out the reaction Release of signal peptides from bacterial membrane prolipoproteins. Hydrolyzes -Xaa-Yaa-Zaa-|-(S,diacylglyceryl)Cys-, in which Xaa is hydrophobic (preferably Leu), and Yaa (Ala or Ser) and Zaa (Gly or Ala) have small, neutral side chains.. The protein operates within protein modification; lipoprotein biosynthesis (signal peptide cleavage). Its function is as follows. This protein specifically catalyzes the removal of signal peptides from prolipoproteins. The sequence is that of Lipoprotein signal peptidase from Shewanella halifaxensis (strain HAW-EB4).